The primary structure comprises 101 residues: Diptericin-D (101 aa).

Residues 1–18 (MKLFYLLVICALSLAVMA) form the signal peptide. O-linked (GalNAc...) threonine glycosylation is found at T28 and T72. Phenylalanine amide is present on F100.

The protein belongs to the attacin/sarcotoxin-2 family.

Functionally, has activity against E.coli. The sequence is that of Diptericin-D from Protophormia terraenovae (Northern blowfly).